The chain runs to 157 residues: Transcription elongation factor GreA (157 aa).

The disordered stretch occupies residues 1 to 24 (MDKFPMTPEGYHALDEELKRRQQE). Basic and acidic residues predominate over residues 12-24 (HALDEELKRRQQE). Residues 53 to 73 (EAQSLNEGRIAELEDKLSRAE) adopt a coiled-coil conformation.

Belongs to the GreA/GreB family.

Its function is as follows. Necessary for efficient RNA polymerase transcription elongation past template-encoded arresting sites. The arresting sites in DNA have the property of trapping a certain fraction of elongating RNA polymerases that pass through, resulting in locked ternary complexes. Cleavage of the nascent transcript by cleavage factors such as GreA or GreB allows the resumption of elongation from the new 3'terminus. GreA releases sequences of 2 to 3 nucleotides. The protein is Transcription elongation factor GreA of Beijerinckia indica subsp. indica (strain ATCC 9039 / DSM 1715 / NCIMB 8712).